Reading from the N-terminus, the 109-residue chain is Flowering-promoting factor 1-like protein 1 (109 aa).

The D-box motif lies at Arg73–Leu81.

It belongs to the FPF1 family. As to quaternary structure, interacts with RPT4. In terms of processing, ubiquitinated. RPT4 mediates its proteasome-dependent degradation. As to expression, specifically expressed in the apical meristem, the elongation zone of root tip, steles of the branch zone, and the young lateral root. Also expressed in spikes. Expressed in roots and spikes (at protein level).

The protein localises to the cytoplasm. It is found in the nucleus. In terms of biological role, GTP-binding protein that functions in the development of root systems, which are mediated by auxin. Acts as a cell cycle regulator during root development. Proteasome-mediated degradation of the protein is necessary for the transition of metaphase to anaphase in mitosis. The chain is Flowering-promoting factor 1-like protein 1 (RAA1) from Oryza sativa subsp. japonica (Rice).